A 171-amino-acid polypeptide reads, in one-letter code: Ribosome maturation factor RimM (171 aa).

A PRC barrel domain is found at 96-168 (EDGFYDHELE…TATITPPEGL (73 aa)).

It belongs to the RimM family. Binds ribosomal protein uS19.

It localises to the cytoplasm. In terms of biological role, an accessory protein needed during the final step in the assembly of 30S ribosomal subunit, possibly for assembly of the head region. Essential for efficient processing of 16S rRNA. May be needed both before and after RbfA during the maturation of 16S rRNA. It has affinity for free ribosomal 30S subunits but not for 70S ribosomes. This Corynebacterium glutamicum (strain R) protein is Ribosome maturation factor RimM.